The following is a 128-amino-acid chain: Small ribosomal subunit protein uS11 (128 aa).

This sequence belongs to the universal ribosomal protein uS11 family. In terms of assembly, part of the 30S ribosomal subunit. Interacts with proteins S7 and S18. Binds to IF-3.

In terms of biological role, located on the platform of the 30S subunit, it bridges several disparate RNA helices of the 16S rRNA. Forms part of the Shine-Dalgarno cleft in the 70S ribosome. The chain is Small ribosomal subunit protein uS11 from Leuconostoc mesenteroides subsp. mesenteroides (strain ATCC 8293 / DSM 20343 / BCRC 11652 / CCM 1803 / JCM 6124 / NCDO 523 / NBRC 100496 / NCIMB 8023 / NCTC 12954 / NRRL B-1118 / 37Y).